Here is a 373-residue protein sequence, read N- to C-terminus: Coiled-coil domain-containing protein 34 (373 aa).

Disordered regions lie at residues 1–112 (MWAA…SLRG) and 118–137 (CASTQVESENNQEEQKQVRL). Ser52 carries the phosphoserine modification. Polar residues predominate over residues 61-76 (NSTRSLLSPLGHQSFQ). Positions 77 to 101 (FDEDDGDGEDEEDVDDEEDVDEDAH) are enriched in acidic residues. Residues 152–286 (KEKEERDRLQ…QEWLENAKHK (135 aa)) are a coiled coil. Residues 324–352 (IHMPPPKEAKDLSGRKSKRPVISQPHKSS) form a disordered region. Residues 328–337 (PPKEAKDLSG) are compositionally biased toward basic and acidic residues.

Expressed in sperm.

It localises to the cell projection. It is found in the cilium. The protein localises to the flagellum. Involved in spermatogenesis. Has a probable role in anterograde intraflagellar transport which is essential for the formation of sperm flagella. The sequence is that of Coiled-coil domain-containing protein 34 (CCDC34) from Homo sapiens (Human).